Reading from the N-terminus, the 593-residue chain is Vitamin H transporter (593 aa).

Over 1–121 (MTISNKSWRS…TTQTKAERRL (121 aa)) the chain is Extracellular. A phosphoserine mark is found at S32, S33, and S43. Residues 122–142 (LYKLDIIIALYFFMLCWSKSV) form a helical membrane-spanning segment. At 143–166 (DLNNYTNAYVSNMKEDLNMKGNDY) the chain is on the cytoplasmic side. Residues 167-187 (VYTSTIANVGAIVFQLPFMYL) traverse the membrane as a helical segment. The Extracellular segment spans residues 188–190 (LPR). Residues 191–211 (FPSHIILPVMDLGWTWFTFAC) traverse the membrane as a helical segment. Residues 212–224 (YRANSLAELRAYR) lie on the Cytoplasmic side of the membrane. Residues 225–245 (FILSAFGAAYYPVSQYILGCW) form a helical membrane-spanning segment. The Extracellular segment spans residues 246-291 (YAPDEINSRVCLFFCGQQLGSVTSGLLQSRIFKSLNGVHGLAGWRW). The helical transmembrane segment at 292–312 (MFLIDAIAISLPTAIIGFFVI) threads the bilayer. At 313–361 (PGVPSKCYSLFLTDEEIRIARARNKRNQIKDGVDKSKLAPLWSRKLWKK) the chain is on the cytoplasmic side. The helical transmembrane segment at 362 to 382 (VFCTPAFWVLVVFDTCSWNNM) threads the bilayer. Residues 383-408 (TAYSGSYTLWLKSNTKYSIAQVNNLS) are Extracellular-facing. Residues 409 to 429 (VIPACLGFAYVIFCAFGADLF) traverse the membrane as a helical segment. Residues 430 to 432 (RCK) are Cytoplasmic-facing. The chain crosses the membrane as a helical span at residues 433 to 453 (WIFMVFAAIMNTVSCALLIKW). Residues 454 to 460 (DIPSKAK) are Extracellular-facing. A helical transmembrane segment spans residues 461–481 (WYAFFTTYFSVAASPCLWSFI). The Cytoplasmic segment spans residues 482–492 (NDFLRFDPQVK). The helical transmembrane segment at 493–513 (AITWIAIYSFSQSTYAWIPTL) threads the bilayer. Topologically, residues 514 to 526 (AWPTVESPRFKTG) are extracellular. A helical membrane pass occupies residues 527–547 (YTVSLIFGAIYGLWTFVVLFF). Over 548–593 (YKRNEKKHALGNGIILYDSNKGEELPEFVKKNMEERDGYYYLKRSS) the chain is Cytoplasmic.

This sequence belongs to the major facilitator superfamily. Allantoate permease family.

The protein resides in the cell membrane. Involved in uptake of biotin with the concomitant entry of protons. The sequence is that of Vitamin H transporter (VHT1) from Saccharomyces cerevisiae (strain ATCC 204508 / S288c) (Baker's yeast).